The primary structure comprises 595 residues: Beta-(1--&gt;2)glucan export ATP-binding/permease protein NdvA (595 aa).

5 consecutive transmembrane segments (helical) span residues F21–L41, L56–V76, I129–P149, L158–Q178, and I252–V272. The region spanning F21–S301 is the ABC transmembrane type-1 domain. One can recognise an ABC transporter domain in the interval I335–R569. An ATP-binding site is contributed by G368–T375.

This sequence belongs to the ABC transporter superfamily. Beta-(1--&gt;2)glucan exporter (TC 3.A.1.108.1) family. In terms of assembly, homodimer.

Its subcellular location is the cell inner membrane. The catalysed reaction is [(1-&gt;2)-beta-D-glucosyl](n)(in) + ATP + H2O = [(1-&gt;2)-beta-D-glucosyl](n)(out) + ADP + phosphate + H(+). Its function is as follows. Involved in beta-(1--&gt;2)glucan export. Transmembrane domains (TMD) form a pore in the inner membrane and the ATP-binding domain (NBD) is responsible for energy generation. This Bartonella bacilliformis protein is Beta-(1--&gt;2)glucan export ATP-binding/permease protein NdvA.